Consider the following 166-residue polypeptide: MSEAIIAKKAEQVELIAEKMKAAASIVIVDSRGLTVDQDTVLRRSLRESGVEFKVIKNSILTRAAEKAGLDELKDVFVGPSAVAFSNEDVIAPAKVINDFTKTADALEIKGGAIEGAVSSKEEIQALATLPNREGMLSMLLSVLQAPVRNVAYAVKAVAENKEGAA.

The protein belongs to the universal ribosomal protein uL10 family. Part of the ribosomal stalk of the 50S ribosomal subunit. The N-terminus interacts with L11 and the large rRNA to form the base of the stalk. The C-terminus forms an elongated spine to which L12 dimers bind in a sequential fashion forming a multimeric L10(L12)X complex.

In terms of biological role, forms part of the ribosomal stalk, playing a central role in the interaction of the ribosome with GTP-bound translation factors. The polypeptide is Large ribosomal subunit protein uL10 (rplJ) (Streptococcus pyogenes serotype M1).